The sequence spans 301 residues: Probable alpha-L-glutamate ligase (301 aa).

An ATP-grasp domain is found at 104–287 (TQLLARKGIG…IAGTIYAFLE (184 aa)). ATP-binding positions include Lys141, 178–179 (EY), Asp187, and 211–213 (RSN). Residues Asp248, Glu260, and Asn262 each coordinate Mg(2+). Mn(2+)-binding residues include Asp248, Glu260, and Asn262.

The protein belongs to the RimK family. Mg(2+) is required as a cofactor. It depends on Mn(2+) as a cofactor.

The chain is Probable alpha-L-glutamate ligase from Alkalilimnicola ehrlichii (strain ATCC BAA-1101 / DSM 17681 / MLHE-1).